The following is a 174-amino-acid chain: Nicotinamide-nucleotide adenylyltransferase (174 aa).

The protein belongs to the archaeal NMN adenylyltransferase family.

It localises to the cytoplasm. It catalyses the reaction beta-nicotinamide D-ribonucleotide + ATP + H(+) = diphosphate + NAD(+). Its pathway is cofactor biosynthesis; NAD(+) biosynthesis; NAD(+) from nicotinamide D-ribonucleotide: step 1/1. This is Nicotinamide-nucleotide adenylyltransferase from Methanospirillum hungatei JF-1 (strain ATCC 27890 / DSM 864 / NBRC 100397 / JF-1).